A 173-amino-acid polypeptide reads, in one-letter code: Peptide methionine sulfoxide reductase MsrA (173 aa).

Residue C10 is part of the active site.

Belongs to the MsrA Met sulfoxide reductase family.

The enzyme catalyses L-methionyl-[protein] + [thioredoxin]-disulfide + H2O = L-methionyl-(S)-S-oxide-[protein] + [thioredoxin]-dithiol. It catalyses the reaction [thioredoxin]-disulfide + L-methionine + H2O = L-methionine (S)-S-oxide + [thioredoxin]-dithiol. Its function is as follows. Has an important function as a repair enzyme for proteins that have been inactivated by oxidation. Catalyzes the reversible oxidation-reduction of methionine sulfoxide in proteins to methionine. The chain is Peptide methionine sulfoxide reductase MsrA from Acinetobacter baumannii (strain AB307-0294).